A 172-amino-acid polypeptide reads, in one-letter code: Large ribosomal subunit protein bL17 (172 aa).

Residues 140–160 (LKAEAKAKREEKKPAKKEEKP) show a composition bias toward basic and acidic residues. The disordered stretch occupies residues 140-172 (LKAEAKAKREEKKPAKKEEKPKKAKKEKAAASN).

The protein belongs to the bacterial ribosomal protein bL17 family. In terms of assembly, part of the 50S ribosomal subunit. Contacts protein L32.

The protein is Large ribosomal subunit protein bL17 of Leptospira biflexa serovar Patoc (strain Patoc 1 / Ames).